We begin with the raw amino-acid sequence, 166 residues long: Monothiol glutaredoxin-3 (166 aa).

The region spanning 56–159 (DSTDFEVFLE…STLDEWTHNK (104 aa)) is the Glutaredoxin domain. Cysteine 76 is a [2Fe-2S] cluster binding site.

The protein belongs to the glutaredoxin family. Monothiol subfamily. As to quaternary structure, homodimer.

The protein resides in the nucleus. Functionally, monothiol glutaredoxin involved in the biogenesis of iron-sulfur clusters. Binds one iron-sulfur cluster per dimer. The iron-sulfur cluster is bound between subunits, and is complexed by a bound glutathione and a cysteine residue from each subunit. This Schizosaccharomyces pombe (strain 972 / ATCC 24843) (Fission yeast) protein is Monothiol glutaredoxin-3 (grx3).